The sequence spans 721 residues: DNA ligase (721 aa).

Residues 39–43 (DAEYD), 89–90 (SL), and E123 contribute to the NAD(+) site. The active-site N6-AMP-lysine intermediate is the K125. NAD(+) contacts are provided by R146, E186, K302, and K326. Zn(2+) contacts are provided by C418, C421, C436, and C442. The segment at 556-588 (QASSAAREGEPANADGAYDPATVTPDSDTAGAE) is disordered. Residues 641-721 (TKDSAVAGKT…AWAEIVRQAG (81 aa)) enclose the BRCT domain.

The protein belongs to the NAD-dependent DNA ligase family. LigA subfamily. It depends on Mg(2+) as a cofactor. The cofactor is Mn(2+).

The catalysed reaction is NAD(+) + (deoxyribonucleotide)n-3'-hydroxyl + 5'-phospho-(deoxyribonucleotide)m = (deoxyribonucleotide)n+m + AMP + beta-nicotinamide D-nucleotide.. Its function is as follows. DNA ligase that catalyzes the formation of phosphodiester linkages between 5'-phosphoryl and 3'-hydroxyl groups in double-stranded DNA using NAD as a coenzyme and as the energy source for the reaction. It is essential for DNA replication and repair of damaged DNA. This Novosphingobium aromaticivorans (strain ATCC 700278 / DSM 12444 / CCUG 56034 / CIP 105152 / NBRC 16084 / F199) protein is DNA ligase.